The chain runs to 28 residues: Conotoxin Cl1.2 (28 aa).

In terms of processing, contains 2 disulfide bonds. Expressed by the venom duct.

Its subcellular location is the secreted. The chain is Conotoxin Cl1.2 from Californiconus californicus (California cone).